The chain runs to 863 residues: Cilia- and flagella-associated protein 58 (863 aa).

Coiled-coil stretches lie at residues 107–600 (TVKE…NERD) and 631–815 (QSQY…KQVF). A disordered region spans residues 836–863 (GPSLLDQLPGGSGTGSGGMATGGGVGMS). Over residues 845–863 (GGSGTGSGGMATGGGVGMS) the composition is skewed to gly residues.

It belongs to the CFAP58 family.

It is found in the cell projection. The protein resides in the cilium. Its subcellular location is the flagellum. The chain is Cilia- and flagella-associated protein 58 from Chlamydomonas reinhardtii (Chlamydomonas smithii).